The chain runs to 187 residues: Elongation factor P (187 aa).

The protein belongs to the elongation factor P family.

The protein resides in the cytoplasm. It participates in protein biosynthesis; polypeptide chain elongation. Its function is as follows. Involved in peptide bond synthesis. Stimulates efficient translation and peptide-bond synthesis on native or reconstituted 70S ribosomes in vitro. Probably functions indirectly by altering the affinity of the ribosome for aminoacyl-tRNA, thus increasing their reactivity as acceptors for peptidyl transferase. This chain is Elongation factor P, found in Corynebacterium kroppenstedtii (strain DSM 44385 / JCM 11950 / CIP 105744 / CCUG 35717).